We begin with the raw amino-acid sequence, 138 residues long: Putative nickel-responsive regulator (138 aa).

4 residues coordinate Ni(2+): H78, H89, H91, and C97.

Belongs to the transcriptional regulatory CopG/NikR family. Ni(2+) is required as a cofactor.

Functionally, transcriptional regulator. This chain is Putative nickel-responsive regulator, found in Thermococcus onnurineus (strain NA1).